The chain runs to 187 residues: Cytochrome b-245 chaperone 1 (187 aa).

The helical transmembrane segment at 20–42 (GIRSWSLLVGILSIGLAAAYYSG) threads the bilayer. Serine 168 is subject to Phosphoserine.

This sequence belongs to the CYBC1 family. As to quaternary structure, interacts with CYBB; CYBC1 may act as a chaperone stabilizing Cytochrome b-245 heterodimer.

Its subcellular location is the endoplasmic reticulum membrane. Functionally, functions as a chaperone necessary for a stable expression of the CYBA and CYBB subunits of the cytochrome b-245 heterodimer. Controls the phagocyte respiratory burst and is essential for innate immunity. In Bos taurus (Bovine), this protein is Cytochrome b-245 chaperone 1.